The following is a 458-amino-acid chain: Ammonium transporter Rh type B (458 aa).

Residues M1 to L13 are Cytoplasmic-facing. The helical transmembrane segment at Q14–V34 threads the bilayer. Topologically, residues R35–Y61 are extracellular. A glycan (N-linked (GlcNAc...) asparagine) is linked at N49. A helical membrane pass occupies residues P62–L82. Over Q83–G86 the chain is Cytoplasmic. A helical transmembrane segment spans residues F87–V107. Over Q108–E124 the chain is Extracellular. A helical membrane pass occupies residues S125 to G145. The Cytoplasmic segment spans residues K146–P149. The helical transmembrane segment at A150 to L170 threads the bilayer. The Extracellular portion of the chain corresponds to L171–D178. The helical transmembrane segment at A179–Y201 threads the bilayer. Residues R202–D219 lie on the Cytoplasmic side of the membrane. The helical transmembrane segment at L220 to L240 threads the bilayer. Over T241 to A251 the chain is Extracellular. A helical membrane pass occupies residues L252–V272. The Cytoplasmic segment spans residues G273–H282. Residues I283–T303 form a helical membrane-spanning segment. P304 is a topological domain (extracellular). The helical transmembrane segment at F305 to F325 threads the bilayer. Over T326–G346 the chain is Cytoplasmic. The helical transmembrane segment at M347 to A367 threads the bilayer. Residues Y368–Q393 lie on the Extracellular side of the membrane. The chain crosses the membrane as a helical span at residues L394–L414. Residues L415–A458 are Cytoplasmic-facing. Residues K416–P424 form an interaction with ANK3 region. Residues Y429 to Q432 carry the Basolateral sorting signal motif. Residues G439–A458 form a disordered region.

This sequence belongs to the ammonium transporter (TC 2.A.49) family. Rh subfamily. In terms of assembly, interacts (via C-terminus) with ANK2 and ANK3; required for targeting to the basolateral membrane. Post-translationally, N-glycosylated.

The protein resides in the cell membrane. The protein localises to the basolateral cell membrane. The catalysed reaction is NH4(+)(in) = NH4(+)(out). The enzyme catalyses methylamine(out) = methylamine(in). It catalyses the reaction CO2(out) = CO2(in). Its function is as follows. Ammonium transporter involved in the maintenance of acid-base homeostasis. Transports ammonium and its related derivative methylammonium across the basolateral plasma membrane of epithelial cells likely contributing to renal transepithelial ammonia transport and ammonia metabolism. May transport either NH4(+) or NH3 ammonia species predominantly mediating an electrogenic NH4(+) transport. May act as a CO2 channel providing for renal acid secretion. The sequence is that of Ammonium transporter Rh type B (RHBG) from Gorilla gorilla gorilla (Western lowland gorilla).